We begin with the raw amino-acid sequence, 174 residues long: Adipose-secreted signaling protein (174 aa).

Belongs to the ADISSP family.

It is found in the secreted. Its function is as follows. May be involved in thermogenesis and glucose homeostasis. This chain is Adipose-secreted signaling protein, found in Xenopus tropicalis (Western clawed frog).